The sequence spans 127 residues: Aspartate 1-decarboxylase (127 aa).

The active-site Schiff-base intermediate with substrate; via pyruvic acid is the Ser-25. Position 25 is a pyruvic acid (Ser) (Ser-25). Thr-57 lines the substrate pocket. Catalysis depends on Tyr-58, which acts as the Proton donor. A substrate-binding site is contributed by 73–75 (GAA).

Belongs to the PanD family. Heterooctamer of four alpha and four beta subunits. Requires pyruvate as cofactor. In terms of processing, is synthesized initially as an inactive proenzyme, which is activated by self-cleavage at a specific serine bond to produce a beta-subunit with a hydroxyl group at its C-terminus and an alpha-subunit with a pyruvoyl group at its N-terminus.

The protein resides in the cytoplasm. It catalyses the reaction L-aspartate + H(+) = beta-alanine + CO2. It functions in the pathway cofactor biosynthesis; (R)-pantothenate biosynthesis; beta-alanine from L-aspartate: step 1/1. In terms of biological role, catalyzes the pyruvoyl-dependent decarboxylation of aspartate to produce beta-alanine. This chain is Aspartate 1-decarboxylase, found in Listeria monocytogenes serotype 4b (strain CLIP80459).